A 275-amino-acid polypeptide reads, in one-letter code: 3-methyl-2-oxobutanoate hydroxymethyltransferase (275 aa).

Residues Asp49 and Asp88 each coordinate Mg(2+). Residues 49–50, Asp88, and Lys118 each bind 3-methyl-2-oxobutanoate; that span reads DS. Glu120 lines the Mg(2+) pocket. Glu187 functions as the Proton acceptor in the catalytic mechanism.

Belongs to the PanB family. As to quaternary structure, homodecamer; pentamer of dimers. Mg(2+) serves as cofactor.

It localises to the cytoplasm. The enzyme catalyses 3-methyl-2-oxobutanoate + (6R)-5,10-methylene-5,6,7,8-tetrahydrofolate + H2O = 2-dehydropantoate + (6S)-5,6,7,8-tetrahydrofolate. It participates in cofactor biosynthesis; (R)-pantothenate biosynthesis; (R)-pantoate from 3-methyl-2-oxobutanoate: step 1/2. Its function is as follows. Catalyzes the reversible reaction in which hydroxymethyl group from 5,10-methylenetetrahydrofolate is transferred onto alpha-ketoisovalerate to form ketopantoate. This is 3-methyl-2-oxobutanoate hydroxymethyltransferase from Bartonella quintana (strain Toulouse) (Rochalimaea quintana).